A 313-amino-acid chain; its full sequence is Homoserine O-acetyltransferase (313 aa).

Catalysis depends on C142, which acts as the Acyl-thioester intermediate. Substrate is bound by residues K163 and S191. Residue H234 is the Proton acceptor of the active site. The active site involves E236. R248 serves as a coordination point for substrate.

This sequence belongs to the MetA family.

Its subcellular location is the cytoplasm. The enzyme catalyses L-homoserine + acetyl-CoA = O-acetyl-L-homoserine + CoA. It participates in amino-acid biosynthesis; L-methionine biosynthesis via de novo pathway; O-acetyl-L-homoserine from L-homoserine: step 1/1. Transfers an acetyl group from acetyl-CoA to L-homoserine, forming acetyl-L-homoserine. This Streptococcus sanguinis (strain SK36) protein is Homoserine O-acetyltransferase.